The chain runs to 70 residues: Putative membrane protein insertion efficiency factor (70 aa).

This sequence belongs to the UPF0161 family.

The protein localises to the cell inner membrane. Could be involved in insertion of integral membrane proteins into the membrane. This is Putative membrane protein insertion efficiency factor from Sphingopyxis alaskensis (strain DSM 13593 / LMG 18877 / RB2256) (Sphingomonas alaskensis).